The chain runs to 842 residues: Histidine biosynthesis trifunctional protein (842 aa).

Residues methionine 1–phenylalanine 275 are phosphoribosyl-AMP cyclohydrolase. Positions cysteine 276–lysine 357 are phosphoribosyl-ATP pyrophosphohydrolase. The histidinol dehydrogenase stretch occupies residues tyrosine 358 to isoleucine 842. Residues lysine 380–serine 403 are disordered. A compositionally biased stretch (basic and acidic residues) spans glutamate 390 to serine 403. The Zn(2+) site is built by glutamine 667 and histidine 670. Catalysis depends on residues glutamate 736 and histidine 737. Residues aspartate 769 and histidine 828 each coordinate Zn(2+).

In the C-terminal section; belongs to the histidinol dehydrogenase family. Requires Zn(2+) as cofactor.

The enzyme catalyses 1-(5-phospho-beta-D-ribosyl)-5'-AMP + H2O = 1-(5-phospho-beta-D-ribosyl)-5-[(5-phospho-beta-D-ribosylamino)methylideneamino]imidazole-4-carboxamide. It catalyses the reaction 1-(5-phospho-beta-D-ribosyl)-ATP + H2O = 1-(5-phospho-beta-D-ribosyl)-5'-AMP + diphosphate + H(+). It carries out the reaction L-histidinol + 2 NAD(+) + H2O = L-histidine + 2 NADH + 3 H(+). It participates in amino-acid biosynthesis; L-histidine biosynthesis; L-histidine from 5-phospho-alpha-D-ribose 1-diphosphate: step 2/9. The protein operates within amino-acid biosynthesis; L-histidine biosynthesis; L-histidine from 5-phospho-alpha-D-ribose 1-diphosphate: step 3/9. Its pathway is amino-acid biosynthesis; L-histidine biosynthesis; L-histidine from 5-phospho-alpha-D-ribose 1-diphosphate: step 9/9. This chain is Histidine biosynthesis trifunctional protein (HIS4), found in Komagataella pastoris (Yeast).